The chain runs to 263 residues: Shikimate dehydrogenase (NADP(+)) (263 aa).

Residues serine 16–serine 18 and threonine 65 each bind shikimate. Lysine 69 functions as the Proton acceptor in the catalytic mechanism. The shikimate site is built by asparagine 90 and aspartate 105. NADP(+) is bound by residues glycine 125–serine 129 and leucine 208. Tyrosine 210 is a shikimate binding site. Glycine 230 contributes to the NADP(+) binding site.

It belongs to the shikimate dehydrogenase family. In terms of assembly, homodimer.

It carries out the reaction shikimate + NADP(+) = 3-dehydroshikimate + NADPH + H(+). It participates in metabolic intermediate biosynthesis; chorismate biosynthesis; chorismate from D-erythrose 4-phosphate and phosphoenolpyruvate: step 4/7. With respect to regulation, inhibited by curcumin, 3-(2-naphthyloxy)-4-oxo-2-(trifluoromethyl)-4H-chromen-7-yl 3-chlorobenzoate, butyl 2-{[3-(2-naphthyloxy)-4-oxo-2-(trifluoromethyl)-4H-chromen-7-yl]oxy}propanoate, 2-({2-[(2-{[2-(2,3-dimethylanilino)-2-oxoethyl]sulfanyl}-1,3-benzothiazol-6-yl)amino]-2-oxoethyl}sulfanyl)-N-(2-naphthyl)acetamide, and maesaquinone diacetate. Its function is as follows. Involved in the biosynthesis of the chorismate, which leads to the biosynthesis of aromatic amino acids. Catalyzes the reversible NADPH linked reduction of 3-dehydroshikimate (DHSA) to yield shikimate (SA). It can also use NAD to oxidize shikimate. This chain is Shikimate dehydrogenase (NADP(+)), found in Helicobacter pylori (Campylobacter pylori).